Consider the following 382-residue polypeptide: Dual-specificity RNA methyltransferase RlmN (382 aa).

The active-site Proton acceptor is Glu-94. Residues 100 to 336 (EANRGTLCVS…NTITRKTRGD (237 aa)) enclose the Radical SAM core domain. A disulfide bridge links Cys-107 with Cys-342. [4Fe-4S] cluster is bound by residues Cys-114, Cys-118, and Cys-121. Residues 168–169 (GE), Ser-200, 222–224 (SLH), and Asn-299 each bind S-adenosyl-L-methionine. The active-site S-methylcysteine intermediate is the Cys-342.

It belongs to the radical SAM superfamily. RlmN family. The cofactor is [4Fe-4S] cluster.

The protein localises to the cytoplasm. The enzyme catalyses adenosine(2503) in 23S rRNA + 2 reduced [2Fe-2S]-[ferredoxin] + 2 S-adenosyl-L-methionine = 2-methyladenosine(2503) in 23S rRNA + 5'-deoxyadenosine + L-methionine + 2 oxidized [2Fe-2S]-[ferredoxin] + S-adenosyl-L-homocysteine. The catalysed reaction is adenosine(37) in tRNA + 2 reduced [2Fe-2S]-[ferredoxin] + 2 S-adenosyl-L-methionine = 2-methyladenosine(37) in tRNA + 5'-deoxyadenosine + L-methionine + 2 oxidized [2Fe-2S]-[ferredoxin] + S-adenosyl-L-homocysteine. Specifically methylates position 2 of adenine 2503 in 23S rRNA and position 2 of adenine 37 in tRNAs. m2A2503 modification seems to play a crucial role in the proofreading step occurring at the peptidyl transferase center and thus would serve to optimize ribosomal fidelity. In Legionella pneumophila subsp. pneumophila (strain Philadelphia 1 / ATCC 33152 / DSM 7513), this protein is Dual-specificity RNA methyltransferase RlmN.